The following is a 454-amino-acid chain: Chromosomal replication initiator protein DnaA (454 aa).

Positions 1-80 (MNLSNLWQSC…NPELRISLKE (80 aa)) are domain I, interacts with DnaA modulators. The tract at residues 80–117 (EGVKPAPKIVESTPNTSLRSESAVDFQAESSASVKFES) is domain II. Positions 118–335 (HLNTKHLFDN…GALNRVKAMQ (218 aa)) are domain III, AAA+ region. Residues Gly163, Gly165, Lys166, and Thr167 each contribute to the ATP site. A domain IV, binds dsDNA region spans residues 336–454 (DFKGGDIDID…WANLIRTLSA (119 aa)).

This sequence belongs to the DnaA family. As to quaternary structure, oligomerizes as a right-handed, spiral filament on DNA at oriC.

It is found in the cytoplasm. In terms of biological role, plays an essential role in the initiation and regulation of chromosomal replication. ATP-DnaA binds to the origin of replication (oriC) to initiate formation of the DNA replication initiation complex once per cell cycle. Binds the DnaA box (a 9 base pair repeat at the origin) and separates the double-stranded (ds)DNA. Forms a right-handed helical filament on oriC DNA; dsDNA binds to the exterior of the filament while single-stranded (ss)DNA is stabiized in the filament's interior. The ATP-DnaA-oriC complex binds and stabilizes one strand of the AT-rich DNA unwinding element (DUE), permitting loading of DNA polymerase. After initiation quickly degrades to an ADP-DnaA complex that is not apt for DNA replication. Binds acidic phospholipids. The chain is Chromosomal replication initiator protein DnaA from Haemophilus influenzae (strain ATCC 51907 / DSM 11121 / KW20 / Rd).